The chain runs to 3799 residues: Polyketide synthase GfsE (3799 aa).

One can recognise a Ketosynthase family 3 (KS3) 1 domain in the interval 33–459; that stretch reads HEPIAIIGMS…GTNAHAILEE (427 aa). 2 module regions span residues 33–1730 and 1749–3494; these read HEPI…RSSA and DEAI…RTDL. Residues C206, H341, and H381 each act as for beta-ketoacyl synthase 1 activity in the active site. Residues 462 to 496 are disordered; that stretch reads AATGNPTEADTDQEPAASASPDRTTTLPAVPWPLS. The Malonyl-CoA:ACP transacylase (MAT) 1 domain occupies 582–895; the sequence is FVFPGQGSQW…LGEAHAHGAD (314 aa). Residues 944–1069 are N-terminal hotdog fold 1; that stretch reads HPLFGAVVEV…GVLELEARPE (126 aa). The PKS/mFAS DH 1 domain occupies 944 to 1222; that stretch reads HPLFGAVVEV…SRPVAEEQLG (279 aa). The active-site Proton acceptor; for dehydratase activity 1 is H976. The segment at 1081–1222 is C-terminal hotdog fold 1; the sequence is AEVVPVEGLY…SRPVAEEQLG (142 aa). The active-site Proton donor; for dehydratase activity 1 is the D1142. The 173-residue stretch at 1382–1554 folds into the Ketoreductase (KR) 1 domain; sequence LLVTGASGVL…TSLSWGLWAE (173 aa). The region spanning 1652 to 1730 is the Carrier 1 domain; that stretch reads EAERAVLELV…ALATHIRSSA (79 aa). An O-(pantetheine 4'-phosphoryl)serine modification is found at S1690. The 426-residue stretch at 1749–2174 folds into the Ketosynthase family 3 (KS3) 2 domain; that stretch reads DEAIAIVGMA…GTNAHVILEQ (426 aa). Residues C1921, H2056, and H2096 each act as for beta-ketoacyl synthase 2 activity in the active site. Positions 2284–2604 constitute a Malonyl-CoA:ACP transacylase (MAT) 2 domain; sequence FVFPGQGSQW…VSLAKVHTHG (321 aa). The tract at residues 2656-2781 is N-terminal hotdog fold 2; that stretch reads HPLLTGVVDL…GTLAVDADHD (126 aa). In terms of domain architecture, PKS/mFAS DH 2 spans 2656–2936; the sequence is HPLLTGVVDL…TRPVTAAQFA (281 aa). H2688 functions as the Proton acceptor; for dehydratase activity 2 in the catalytic mechanism. The C-terminal hotdog fold 2 stretch occupies residues 2794 to 2936; it reads ADPVDLTEVY…TRPVTAAQFA (143 aa). The Proton donor; for dehydratase activity 2 role is filled by D2855. Positions 3142-3314 constitute a Ketoreductase (KR) 2 domain; it reads LLVTGASGVL…TALSWGLWAE (173 aa). Positions 3419-3494 constitute a Carrier 2 domain; that stretch reads AALLDLVGAQ…ALAAQLRTDL (76 aa). Position 3454 is an O-(pantetheine 4'-phosphoryl)serine (S3454).

Pantetheine 4'-phosphate serves as cofactor.

It participates in antibiotic biosynthesis. Its function is as follows. Fifth protein in the synthesis of the 16-membered macrolide antibiotics FD-891 and FD-892. Composed of 2 modules. Modifies the product of GfsD by multiple rounds of addition of methylmalonyl-CoA and other modifications to help generate the final products. This Streptomyces halstedii protein is Polyketide synthase GfsE.